The primary structure comprises 458 residues: UDP-N-acetylmuramoylalanine--D-glutamate ligase (458 aa).

Position 124–130 (124–130 (GSDGKTT)) interacts with ATP.

The protein belongs to the MurCDEF family.

Its subcellular location is the cytoplasm. It catalyses the reaction UDP-N-acetyl-alpha-D-muramoyl-L-alanine + D-glutamate + ATP = UDP-N-acetyl-alpha-D-muramoyl-L-alanyl-D-glutamate + ADP + phosphate + H(+). It functions in the pathway cell wall biogenesis; peptidoglycan biosynthesis. Cell wall formation. Catalyzes the addition of glutamate to the nucleotide precursor UDP-N-acetylmuramoyl-L-alanine (UMA). The chain is UDP-N-acetylmuramoylalanine--D-glutamate ligase from Clostridium botulinum (strain ATCC 19397 / Type A).